Here is a 297-residue protein sequence, read N- to C-terminus: Phosphoribosylaminoimidazole-succinocarboxamide synthase (297 aa).

This sequence belongs to the SAICAR synthetase family.

The catalysed reaction is 5-amino-1-(5-phospho-D-ribosyl)imidazole-4-carboxylate + L-aspartate + ATP = (2S)-2-[5-amino-1-(5-phospho-beta-D-ribosyl)imidazole-4-carboxamido]succinate + ADP + phosphate + 2 H(+). It functions in the pathway purine metabolism; IMP biosynthesis via de novo pathway; 5-amino-1-(5-phospho-D-ribosyl)imidazole-4-carboxamide from 5-amino-1-(5-phospho-D-ribosyl)imidazole-4-carboxylate: step 1/2. The protein is Phosphoribosylaminoimidazole-succinocarboxamide synthase of Mycobacterium ulcerans (strain Agy99).